Consider the following 404-residue polypeptide: NADH-quinone oxidoreductase subunit D 1 (404 aa).

The protein belongs to the complex I 49 kDa subunit family. As to quaternary structure, NDH-1 is composed of 14 different subunits. Subunits NuoB, C, D, E, F, and G constitute the peripheral sector of the complex.

It is found in the cell inner membrane. It catalyses the reaction a quinone + NADH + 5 H(+)(in) = a quinol + NAD(+) + 4 H(+)(out). Functionally, NDH-1 shuttles electrons from NADH, via FMN and iron-sulfur (Fe-S) centers, to quinones in the respiratory chain. The immediate electron acceptor for the enzyme in this species is believed to be ubiquinone. Couples the redox reaction to proton translocation (for every two electrons transferred, four hydrogen ions are translocated across the cytoplasmic membrane), and thus conserves the redox energy in a proton gradient. The sequence is that of NADH-quinone oxidoreductase subunit D 1 from Sorangium cellulosum (strain So ce56) (Polyangium cellulosum (strain So ce56)).